The sequence spans 177 residues: Thymidine kinase (177 aa).

11–18 (GPMFSGKS) is a binding site for ATP. The active-site Proton acceptor is the Glu83. Phe113 is a binding site for substrate. The Zn(2+) site is built by Cys138 and Cys141. 157-161 (IEIIG) lines the substrate pocket. Zn(2+)-binding residues include Cys170 and Cys173.

The protein belongs to the thymidine kinase family. As to quaternary structure, homotetramer. Two molecules of substrate bind to each enzyme tetramer.

The enzyme catalyses thymidine + ATP = dTMP + ADP + H(+). Phosphorylates thymidine and thymidine analogs, such as azidothymidine (AZT). Part of the salvage pathway for pyrimidine deoxyribonucleotide synthesis. The polypeptide is Thymidine kinase (OPG101) (Procyon lotor (Raccoon)).